Here is a 569-residue protein sequence, read N- to C-terminus: Proline--tRNA ligase (569 aa).

It belongs to the class-II aminoacyl-tRNA synthetase family. ProS type 1 subfamily. Homodimer.

It is found in the cytoplasm. It catalyses the reaction tRNA(Pro) + L-proline + ATP = L-prolyl-tRNA(Pro) + AMP + diphosphate. Functionally, catalyzes the attachment of proline to tRNA(Pro) in a two-step reaction: proline is first activated by ATP to form Pro-AMP and then transferred to the acceptor end of tRNA(Pro). As ProRS can inadvertently accommodate and process non-cognate amino acids such as alanine and cysteine, to avoid such errors it has two additional distinct editing activities against alanine. One activity is designated as 'pretransfer' editing and involves the tRNA(Pro)-independent hydrolysis of activated Ala-AMP. The other activity is designated 'posttransfer' editing and involves deacylation of mischarged Ala-tRNA(Pro). The misacylated Cys-tRNA(Pro) is not edited by ProRS. The protein is Proline--tRNA ligase of Colwellia psychrerythraea (strain 34H / ATCC BAA-681) (Vibrio psychroerythus).